The sequence spans 85 residues: Putative sodium channel toxin Ts37 (85 aa).

A signal peptide spans 1-20 (MAGEWACLLVSLVLLWGAAG). The 62-residue stretch at 22 to 83 (RDGFLLDRNF…KIWGDSVRCR (62 aa)) folds into the LCN-type CS-alpha/beta domain. 4 disulfide bridges follow: Cys32-Cys82, Cys36-Cys59, Cys45-Cys64, and Cys49-Cys66.

This sequence belongs to the long (4 C-C) scorpion toxin superfamily. Sodium channel inhibitor family. In terms of tissue distribution, expressed by the venom gland.

Its subcellular location is the secreted. Its function is as follows. Putative sodium channel toxin. This is Putative sodium channel toxin Ts37 from Tityus serrulatus (Brazilian scorpion).